The sequence spans 208 residues: Large ribosomal subunit protein uL4 (208 aa).

It belongs to the universal ribosomal protein uL4 family. In terms of assembly, part of the 50S ribosomal subunit.

In terms of biological role, one of the primary rRNA binding proteins, this protein initially binds near the 5'-end of the 23S rRNA. It is important during the early stages of 50S assembly. It makes multiple contacts with different domains of the 23S rRNA in the assembled 50S subunit and ribosome. Forms part of the polypeptide exit tunnel. This Solibacter usitatus (strain Ellin6076) protein is Large ribosomal subunit protein uL4.